Here is a 416-residue protein sequence, read N- to C-terminus: UDP-N-acetylglucosamine 1-carboxyvinyltransferase (416 aa).

Residue 22-23 coordinates phosphoenolpyruvate; sequence KN. Arginine 92 lines the UDP-N-acetyl-alpha-D-glucosamine pocket. Catalysis depends on cysteine 116, which acts as the Proton donor. Cysteine 116 carries the post-translational modification 2-(S-cysteinyl)pyruvic acid O-phosphothioketal. Residues 121 to 125, aspartate 304, and isoleucine 326 contribute to the UDP-N-acetyl-alpha-D-glucosamine site; that span reads RPVDQ.

Belongs to the EPSP synthase family. MurA subfamily.

The protein resides in the cytoplasm. It carries out the reaction phosphoenolpyruvate + UDP-N-acetyl-alpha-D-glucosamine = UDP-N-acetyl-3-O-(1-carboxyvinyl)-alpha-D-glucosamine + phosphate. The protein operates within cell wall biogenesis; peptidoglycan biosynthesis. Cell wall formation. Adds enolpyruvyl to UDP-N-acetylglucosamine. The protein is UDP-N-acetylglucosamine 1-carboxyvinyltransferase of Aromatoleum aromaticum (strain DSM 19018 / LMG 30748 / EbN1) (Azoarcus sp. (strain EbN1)).